A 702-amino-acid chain; its full sequence is Dynein intermediate chain 2, ciliary (702 aa).

Positions 1–11 are enriched in low complexity; the sequence is MPVKSTKTKGG. Disordered stretches follow at residues 1 to 64, 128 to 226, and 243 to 272; these read MPVK…IKPD, DEAR…FSST, and QEKA…ETQS. 2 stretches are compositionally biased toward basic and acidic residues: residues 36–52 and 152–176; these read GKKD…HGGE and GEEK…RDEE. The span at 189–206 shows a compositional bias: polar residues; it reads KLTNQFNFSERASQTYNN. The segment covering 243-261 has biased composition (basic and acidic residues); sequence QEKAKEKKAAPSKKDDDKS. WD repeat units follow at residues 380–420, 429–472, 490–533, 537–577, 580–620, and 628–667; these read PTDS…ANPV, KHTD…LTYT, TQLT…QFLD, AHHM…GPMF, DLGS…YEPI, and KKKT…RKVP.

It belongs to the dynein intermediate chain family. Consists of at least two heavy chains (alpha and beta), three intermediate chains and several light chains.

Its subcellular location is the cytoplasm. The protein resides in the cytoskeleton. It is found in the cilium axoneme. In terms of biological role, microtubule-binding protein that may be involved in dynein outer arm assembly on the axoneme. This chain is Dynein intermediate chain 2, ciliary, found in Heliocidaris crassispina (Sea urchin).